We begin with the raw amino-acid sequence, 734 residues long: Photosystem I P700 chlorophyll a apoprotein A2 (734 aa).

Helical transmembrane passes span 46–69 (IFAS…FHVA), 135–158 (LYTG…LHLQ), 175–199 (LNHH…HVAI), 273–291 (MAHH…GHMY), 330–353 (LHFQ…QHMY), 369–395 (AALY…IFFL), 417–439 (AIIS…LYVH), and 517–535 (FLVH…LILV). 2 residues coordinate [4Fe-4S] cluster: Cys-559 and Cys-568. The next 2 helical transmembrane spans lie at 575–596 (AFYL…YWHW) and 643–665 (LSVW…MFLI). Chlorophyll a contacts are provided by His-654, Met-662, and Tyr-670. Trp-671 contributes to the phylloquinone binding site. A helical transmembrane segment spans residues 707-727 (LVGLAHFSVGYIFTYAAFLIA).

The protein belongs to the PsaA/PsaB family. The PsaA/B heterodimer binds the P700 chlorophyll special pair and subsequent electron acceptors. PSI consists of a core antenna complex that captures photons, and an electron transfer chain that converts photonic excitation into a charge separation. The eukaryotic PSI reaction center is composed of at least 11 subunits. Requires P700 is a chlorophyll a/chlorophyll a' dimer, A0 is one or more chlorophyll a, A1 is one or both phylloquinones and FX is a shared 4Fe-4S iron-sulfur center. as cofactor.

It is found in the plastid. The protein localises to the chloroplast thylakoid membrane. It catalyses the reaction reduced [plastocyanin] + hnu + oxidized [2Fe-2S]-[ferredoxin] = oxidized [plastocyanin] + reduced [2Fe-2S]-[ferredoxin]. Its function is as follows. PsaA and PsaB bind P700, the primary electron donor of photosystem I (PSI), as well as the electron acceptors A0, A1 and FX. PSI is a plastocyanin-ferredoxin oxidoreductase, converting photonic excitation into a charge separation, which transfers an electron from the donor P700 chlorophyll pair to the spectroscopically characterized acceptors A0, A1, FX, FA and FB in turn. Oxidized P700 is reduced on the lumenal side of the thylakoid membrane by plastocyanin. This Adiantum capillus-veneris (Maidenhair fern) protein is Photosystem I P700 chlorophyll a apoprotein A2.